The primary structure comprises 270 residues: tRNA pseudouridine synthase A (270 aa).

The Nucleophile role is filled by aspartate 60. The RNA binding stretch occupies residues 107–111; sequence FHARF. Residue tyrosine 118 participates in substrate binding. Positions 168–172 are interaction with tRNA; that stretch reads QCQSR.

It belongs to the tRNA pseudouridine synthase TruA family. As to quaternary structure, homodimer.

It carries out the reaction uridine(38/39/40) in tRNA = pseudouridine(38/39/40) in tRNA. Formation of pseudouridine at positions 38, 39 and 40 in the anticodon stem and loop of transfer RNAs. The polypeptide is tRNA pseudouridine synthase A (Shigella sonnei (strain Ss046)).